A 914-amino-acid chain; its full sequence is Isoleucine--tRNA ligase (914 aa).

Positions 64-74 match the 'HIGH' region motif; the sequence is PYANGNFHLGH. Glu557 is an L-isoleucyl-5'-AMP binding site. The 'KMSKS' region signature appears at 598-602; the sequence is PMSKS. Residue Lys601 coordinates ATP. Zn(2+) contacts are provided by Cys889, Cys892, Cys906, and Cys909.

Belongs to the class-I aminoacyl-tRNA synthetase family. IleS type 1 subfamily. As to quaternary structure, monomer. Requires Zn(2+) as cofactor.

It is found in the cytoplasm. It carries out the reaction tRNA(Ile) + L-isoleucine + ATP = L-isoleucyl-tRNA(Ile) + AMP + diphosphate. Functionally, catalyzes the attachment of isoleucine to tRNA(Ile). As IleRS can inadvertently accommodate and process structurally similar amino acids such as valine, to avoid such errors it has two additional distinct tRNA(Ile)-dependent editing activities. One activity is designated as 'pretransfer' editing and involves the hydrolysis of activated Val-AMP. The other activity is designated 'posttransfer' editing and involves deacylation of mischarged Val-tRNA(Ile). This is Isoleucine--tRNA ligase from Leptospira interrogans serogroup Icterohaemorrhagiae serovar copenhageni (strain Fiocruz L1-130).